The chain runs to 196 residues: dITP/XTP pyrophosphatase (196 aa).

9-14 (TSNAGK) contributes to the substrate binding site. Positions 39 and 68 each coordinate Mg(2+). The Proton acceptor role is filled by Asp-68. Residues Ser-69, 147–150 (FGYD), Lys-170, and 175–176 (HR) each bind substrate.

This sequence belongs to the HAM1 NTPase family. As to quaternary structure, homodimer. Requires Mg(2+) as cofactor.

It catalyses the reaction XTP + H2O = XMP + diphosphate + H(+). The enzyme catalyses dITP + H2O = dIMP + diphosphate + H(+). It carries out the reaction ITP + H2O = IMP + diphosphate + H(+). Its function is as follows. Pyrophosphatase that catalyzes the hydrolysis of nucleoside triphosphates to their monophosphate derivatives, with a high preference for the non-canonical purine nucleotides XTP (xanthosine triphosphate), dITP (deoxyinosine triphosphate) and ITP. Seems to function as a house-cleaning enzyme that removes non-canonical purine nucleotides from the nucleotide pool, thus preventing their incorporation into DNA/RNA and avoiding chromosomal lesions. The protein is dITP/XTP pyrophosphatase of Nostoc sp. (strain PCC 7120 / SAG 25.82 / UTEX 2576).